Here is a 332-residue protein sequence, read N- to C-terminus: Acryloyl-coenzyme A reductase (332 aa).

Position 38 (Cys38) interacts with Zn(2+). Position 39 (Tyr39) interacts with NADP(+). 6 residues coordinate Zn(2+): His60, Asp90, Cys93, Cys96, Cys104, and Cys146. Residues 172–175 (SGGV) and 194–196 (TTS) each bind NADP(+).

The protein belongs to the zinc-containing alcohol dehydrogenase family. As to quaternary structure, monomer. The cofactor is Zn(2+).

It carries out the reaction propanoyl-CoA + NADP(+) = acryloyl-CoA + NADPH + H(+). Plays a role in autotrophic carbon fixation via the 3-hydroxypropionate/4-hydroxybutyrate cycle. Catalyzes the acryloyl-CoA dependent NADPH oxidation and formation of propionyl-CoA. The polypeptide is Acryloyl-coenzyme A reductase (Metallosphaera sedula (strain ATCC 51363 / DSM 5348 / JCM 9185 / NBRC 15509 / TH2)).